Here is a 370-residue protein sequence, read N- to C-terminus: Dual-specificity RNA methyltransferase RlmN (370 aa).

Catalysis depends on Glu93, which acts as the Proton acceptor. Positions 99-337 constitute a Radical SAM core domain; it reads EEGRGTLCVS…VTTVRKTRGD (239 aa). A disulfide bridge links Cys106 with Cys343. 3 residues coordinate [4Fe-4S] cluster: Cys113, Cys117, and Cys120. Residues 167–168, Ser199, 221–223, and Asn300 contribute to the S-adenosyl-L-methionine site; these read GE and SLH. The active-site S-methylcysteine intermediate is Cys343.

It belongs to the radical SAM superfamily. RlmN family. [4Fe-4S] cluster is required as a cofactor.

The protein localises to the cytoplasm. The catalysed reaction is adenosine(2503) in 23S rRNA + 2 reduced [2Fe-2S]-[ferredoxin] + 2 S-adenosyl-L-methionine = 2-methyladenosine(2503) in 23S rRNA + 5'-deoxyadenosine + L-methionine + 2 oxidized [2Fe-2S]-[ferredoxin] + S-adenosyl-L-homocysteine. It carries out the reaction adenosine(37) in tRNA + 2 reduced [2Fe-2S]-[ferredoxin] + 2 S-adenosyl-L-methionine = 2-methyladenosine(37) in tRNA + 5'-deoxyadenosine + L-methionine + 2 oxidized [2Fe-2S]-[ferredoxin] + S-adenosyl-L-homocysteine. Functionally, specifically methylates position 2 of adenine 2503 in 23S rRNA and position 2 of adenine 37 in tRNAs. m2A2503 modification seems to play a crucial role in the proofreading step occurring at the peptidyl transferase center and thus would serve to optimize ribosomal fidelity. The protein is Dual-specificity RNA methyltransferase RlmN of Francisella tularensis subsp. mediasiatica (strain FSC147).